We begin with the raw amino-acid sequence, 1196 residues long: METKPKTATTIKVPPGPLGYVYARACPSEGIELLALLSARSGDSDVAVAPLVVGLTVESGFEANVAVVVGSRTTGLGGTAVSLKLTPSHYSSSVYVFHGGRHLDPSTQAPNLTRLCERARRHFGFSDYTPRPGDLKHETTGEALCERLGLDPDRALLYLVVTEGFKEAVCINNTFLHLGGSDKVTIGGAEVHRIPVYPLQLFMPDFSRVIAEPFNANHRSIGEKFTYPLPFFNRPLNRLLFEAVVGPAAVALRCRNVDAVARAAAHLAFDENHEGAALPADITFTAFEASQGKTPRGGRDGGGKGAAGGFEQRLASVMAGDAALALESIVSMAVFDEPPTDISAWPLFEGQDTAAARANAVGAYLARAAGLVGAMVFSTNSALHLTEVDDAGPADPKDHSKPSFYRFFLVPGTHVAANPQVDREGHVVPGFEGRPTAPLVGGTQEFAGEHLAMLCGFSPALLAKMLFYLERCDGAVIVGRQEMDVFRYVADSNQTDVPCNLCTFDTRHACVHTTLMRLRARHPKFASAARGAIGVFGTMNSMYSDCDVLGNYAAFSALKRADGSETARTIMQETYRAATERVMAELETLQYVDQAVPTAMGRLETIITNREALHTVVNNVRQVVDREVEQLMRNLVEGRNFKFRDGLGEANHAMSLTLDPYACGPCPLLQLLGRRSNLAVYQDLALSQCHGVFAGQSVEGRNFRNQFQPVLRRRVMDMFNNGFLSAKTLTVALSEGAAICAPSLTAGQTAPAESSFEGDVARVTLGFPKELRVKSRVLFAGASANASEAAKARVASLQSAYQKPDKRVDILLGPLGFLLKQFHAAIFPNGKPPGSNQPNPQWFWTALQRNQLPARLLSREDIETIAFIKKFSLDYGAINFINLAPNNVSELAMYYMANQILRYCDHSTYFINTLTAIIAGSRRPPSVQAAAAWSAQGGAGLEAGARALMDAVDAHPGAWTSMFASCNLLRPVMAARPMVVLGLSISKYYGMAGNDRVFQAGNWASLMGGKNACPLLIFDRTRKFVLACPRAGFVCAASSLGGGAHESSLCEQLRGIISEGGAAVASSVFVATVKSLGPRTQQLQIEDWLALLEDEYLSEEMMELTARALERGNGEWSTDAALEVAHEAEALVSQLGNAGEVFNFGDFGCEDDNATPFGGPGAPGPAFAGRKRAFHGDDPFGEGPPDKKGDLTLDML.

A zinc finger spans residues 499–512 (CNLCTFDTRHACVH). 2 consecutive short sequence motifs (required for filament formation) follow at residues 843-844 (FW) and 1142-1144 (FNF). The disordered stretch occupies residues 1158–1196 (GGPGAPGPAFAGRKRAFHGDDPFGEGPPDKKGDLTLDML). The tract at residues 1170–1196 (RKRAFHGDDPFGEGPPDKKGDLTLDML) is required for nuclear localization. Over residues 1174 to 1196 (FHGDDPFGEGPPDKKGDLTLDML) the composition is skewed to basic and acidic residues.

This sequence belongs to the herpesviridae major DNA-binding protein family. In terms of assembly, homooligomers. Forms double-helical filaments necessary for the formation of replication compartments within the host nucleus. Interacts with the origin-binding protein. Interacts with the helicase primase complex; this interaction stimulates primer synthesis activity of the helicase-primase complex. Interacts with the DNA polymerase. Interacts with the alkaline exonuclease; this interaction increases its nuclease processivity. Interacts with ICP27; this interaction plays a role in the stimulation of late gene transcription.

It is found in the host nucleus. In terms of biological role, plays several crucial roles in viral infection. Participates in the opening of the viral DNA origin to initiate replication by interacting with the origin-binding protein. May disrupt loops, hairpins and other secondary structures present on ssDNA to reduce and eliminate pausing of viral DNA polymerase at specific sites during elongation. Promotes viral DNA recombination by performing strand-transfer, characterized by the ability to transfer a DNA strand from a linear duplex to a complementary single-stranded DNA circle. Can also catalyze the renaturation of complementary single strands. Additionally, reorganizes the host cell nucleus, leading to the formation of prereplicative sites and replication compartments. This process is driven by the protein which can form double-helical filaments in the absence of DNA. This is Major DNA-binding protein from Homo sapiens (Human).